The primary structure comprises 260 residues: Small ribosomal subunit protein eS1 (260 aa).

At Lys30 the chain carries N6-acetyllysine; alternate. A Glycyl lysine isopeptide (Lys-Gly) (interchain with G-Cter in SUMO2); alternate cross-link involves residue Lys30. N6-acetyllysine is present on Lys52. Tyr151 is modified (ADP-ribosyltyrosine). The segment at 228-260 is disordered; it reads HGEGSSSGKATGDETGAKVERADGYEPPVQESV. Ser232 and Ser233 each carry phosphoserine. Positions 238 to 251 are enriched in basic and acidic residues; it reads TGDETGAKVERADG. Residue Lys245 is modified to N6-acetyllysine; alternate. A Glycyl lysine isopeptide (Lys-Gly) (interchain with G-Cter in SUMO2); alternate cross-link involves residue Lys245. Position 252 is a phosphotyrosine (Tyr252). Ser259 carries the post-translational modification Phosphoserine.

The protein belongs to the eukaryotic ribosomal protein eS1 family. Component of the small ribosomal subunit. Mature ribosomes consist of a small (40S) and a large (60S) subunit. The 40S subunit contains about 33 different proteins and 1 molecule of RNA (18S). The 60S subunit contains about 49 different proteins and 3 molecules of RNA (28S, 5.8S and 5S). Identified in a IGF2BP1-dependent mRNP granule complex containing untranslated mRNAs. Binds with high affinity to IPO4. Interacts with DDIT3. Part of the small subunit (SSU) processome, composed of more than 70 proteins and the RNA chaperone small nucleolar RNA (snoRNA) U3. In terms of processing, ADP-ribosylated at Tyr-151 by PARP1 in presence of HPF1.

The protein localises to the cytoplasm. The protein resides in the nucleus. It is found in the nucleolus. In terms of biological role, component of the small ribosomal subunit. The ribosome is a large ribonucleoprotein complex responsible for the synthesis of proteins in the cell. Part of the small subunit (SSU) processome, first precursor of the small eukaryotic ribosomal subunit. During the assembly of the SSU processome in the nucleolus, many ribosome biogenesis factors, an RNA chaperone and ribosomal proteins associate with the nascent pre-rRNA and work in concert to generate RNA folding, modifications, rearrangements and cleavage as well as targeted degradation of pre-ribosomal RNA by the RNA exosome. May play a role during erythropoiesis through regulation of transcription factor DDIT3. This is Small ribosomal subunit protein eS1 from Felis catus (Cat).